Consider the following 294-residue polypeptide: Segregation and condensation protein A (294 aa).

The protein belongs to the ScpA family. In terms of assembly, component of a cohesin-like complex composed of ScpA, ScpB and the Smc homodimer, in which ScpA and ScpB bind to the head domain of Smc. The presence of the three proteins is required for the association of the complex with DNA.

It is found in the cytoplasm. In terms of biological role, participates in chromosomal partition during cell division. May act via the formation of a condensin-like complex containing Smc and ScpB that pull DNA away from mid-cell into both cell halves. The polypeptide is Segregation and condensation protein A (Ureaplasma parvum serovar 3 (strain ATCC 700970)).